The sequence spans 733 residues: Ribosomal protein S6 kinase alpha-2 (733 aa).

One can recognise a Protein kinase 1 domain in the interval 59–318 (FELLKVLGQG…VEEIKRHPFF (260 aa)). ATP-binding positions include 65 to 73 (LGQGSYGKV) and Lys91. The active-site Proton acceptor is Asp184. A Phosphoserine; by PDPK1 modification is found at Ser218. The 70-residue stretch at 319-388 (VTIDWNTLYR…VASSLIQEPS (70 aa)) folds into the AGC-kinase C-terminal domain. The residue at position 377 (Ser377) is a Phosphoserine. The Protein kinase 2 domain maps to 415 to 672 (YEIKEDIGVG…AMQVLKHPWV (258 aa)). ATP contacts are provided by residues 421–429 (IGVGSYSVC) and Lys444. The Proton acceptor role is filled by Asp532.

The protein belongs to the protein kinase superfamily. AGC Ser/Thr protein kinase family. S6 kinase subfamily. Forms a complex with either MAPK1/ERK2 or MAPK3/ERK1 in quiescent cells. Transiently dissociates following mitogenic stimulation. Interacts with FBXO5; cooperate to induce the metaphase arrest of early blastomeres; increases and stabilizes interaction of FBXO5 with CDC20. It depends on Mg(2+) as a cofactor. In terms of processing, activated by phosphorylation at Ser-218 by PDPK1. Autophosphorylated on Ser-377, as part of the activation process. May be phosphorylated at Thr-356 and Ser-360 by MAPK1/ERK2 and MAPK3/ERK1. Post-translationally, N-terminal myristoylation results in an activated kinase in the absence of added growth factors. In terms of tissue distribution, widely expressed with higher expression in lung, skeletal muscle, brain, uterus, ovary, thyroid and prostate.

Its subcellular location is the nucleus. It is found in the cytoplasm. It carries out the reaction L-seryl-[protein] + ATP = O-phospho-L-seryl-[protein] + ADP + H(+). The catalysed reaction is L-threonyl-[protein] + ATP = O-phospho-L-threonyl-[protein] + ADP + H(+). With respect to regulation, upon extracellular signal or mitogen stimulation, phosphorylated at Thr-570 in the C-terminal kinase domain (CTKD) by MAPK1/ERK2 and MAPK3/ERK1. The activated CTKD then autophosphorylates Ser-377, allowing binding of PDPK1, which in turn phosphorylates Ser-218 in the N-terminal kinase domain (NTDK) leading to the full activation of the protein and subsequent phosphorylation of the substrates by the NTKD. Serine/threonine-protein kinase that acts downstream of ERK (MAPK1/ERK2 and MAPK3/ERK1) signaling and mediates mitogenic and stress-induced activation of transcription factors, regulates translation, and mediates cellular proliferation, survival, and differentiation. May function as tumor suppressor in epithelial ovarian cancer cells. This Homo sapiens (Human) protein is Ribosomal protein S6 kinase alpha-2 (RPS6KA2).